The sequence spans 233 residues: Small ribosomal subunit protein uS7m (233 aa).

Residues 1–28 (MAAPTGKLLVHRIRAGLTCLTQVRWSRY) constitute a mitochondrion transit peptide.

The protein belongs to the universal ribosomal protein uS7 family. Component of the mitochondrial ribosome small subunit (28S) which comprises a 12S rRNA and about 30 distinct proteins.

It localises to the mitochondrion. The chain is Small ribosomal subunit protein uS7m (mrps7) from Xenopus laevis (African clawed frog).